The primary structure comprises 88 residues: Small ribosomal subunit protein bS20 (88 aa).

The interval 1–23 (MANSPQAKKRARQNDKARAHNAS) is disordered.

It belongs to the bacterial ribosomal protein bS20 family.

In terms of biological role, binds directly to 16S ribosomal RNA. This Teredinibacter turnerae (strain ATCC 39867 / T7901) protein is Small ribosomal subunit protein bS20.